The sequence spans 258 residues: NAD kinase (258 aa).

Residue Asp45 is the Proton acceptor of the active site. Residues 45–46, 117–118, Asp147, Ala155, 158–163, and Ala182 each bind NAD(+); these read DG, NE, and TAYNYS.

It belongs to the NAD kinase family. It depends on a divalent metal cation as a cofactor.

Its subcellular location is the cytoplasm. It carries out the reaction NAD(+) + ATP = ADP + NADP(+) + H(+). In terms of biological role, involved in the regulation of the intracellular balance of NAD and NADP, and is a key enzyme in the biosynthesis of NADP. Catalyzes specifically the phosphorylation on 2'-hydroxyl of the adenosine moiety of NAD to yield NADP. This Xanthomonas campestris pv. campestris (strain 8004) protein is NAD kinase.